Consider the following 791-residue polypeptide: Diacylglycerol kinase gamma (791 aa).

2 disordered regions span residues 82–103 and 117–154; these read KPRH…ANSA and DEAC…SSSS. Over residues 83 to 92 the composition is skewed to basic and acidic residues; the sequence is PRHETSDHPT. Residues 94–103 show a composition bias toward polar residues; that stretch reads GASNSEANSA. 2 consecutive EF-hand domains span residues 175–210 and 220–255; these read RPQD…MLHI and ELRP…TIPL. Positions 188, 190, 192, 199, 233, 235, 237, and 244 each coordinate Ca(2+). Phorbol-ester/DAG-type zinc fingers lie at residues 271 to 321 and 336 to 385; these read RHAW…IPGC and QHAW…LCDG. Residues 430-564 form the DAGKc domain; the sequence is PGTHPLLVLV…LDRWHLEVIP (135 aa). Positions 768 to 791 are disordered; that stretch reads APMMMGPPQKSSFFSLRRKSRSKD.

The protein belongs to the eukaryotic diacylglycerol kinase family. As to expression, predominantly expressed in retina and in a much lesser extent in the brain. Other tissues contain extremely low levels of DGK-gamma.

Its subcellular location is the membrane. The protein resides in the cytoplasm. It localises to the cytosol. It is found in the cytoskeleton. It catalyses the reaction a 1,2-diacyl-sn-glycerol + ATP = a 1,2-diacyl-sn-glycero-3-phosphate + ADP + H(+). The enzyme catalyses 1,2-didecanoyl-sn-glycerol + ATP = 1,2-didecanoyl-sn-glycero-3-phosphate + ADP + H(+). It carries out the reaction 1-octadecanoyl-2-(5Z,8Z,11Z,14Z-eicosatetraenoyl)-sn-glycerol + ATP = 1-octadecanoyl-2-(5Z,8Z,11Z,14Z-eicosatetraenoyl)-sn-glycero-3-phosphate + ADP + H(+). The catalysed reaction is 1,2-di-(9Z-octadecenoyl)-sn-glycerol + ATP = 1,2-di-(9Z-octadecenoyl)-sn-glycero-3-phosphate + ADP + H(+). It catalyses the reaction 1-octadecanoyl-2-(9Z,12Z)-octadecadienoyl-sn-glycerol + ATP = 1-octadecanoyl-2-(9Z,12Z-octadecadienoyl)-sn-glycero-3-phosphate + ADP + H(+). It participates in lipid metabolism; glycerolipid metabolism. With respect to regulation, the activity is calcium-dependent. Requires phosphatidylserine for maximal activity. In terms of biological role, diacylglycerol kinase that converts diacylglycerol/DAG into phosphatidic acid/phosphatidate/PA and regulates the respective levels of these two bioactive lipids. Thereby, acts as a central switch between the signaling pathways activated by these second messengers with different cellular targets and opposite effects in numerous biological processes. Has no apparent specificity with regard to the acyl compositions of diacylglycerol. Specifically expressed in the cerebellum where it controls the level of diacylglycerol which in turn regulates the activity of protein kinase C gamma. Through protein kinase C gamma, indirectly regulates the dendritic development of Purkinje cells, cerebellar long term depression and ultimately cerebellar motor coordination. This is Diacylglycerol kinase gamma (DGKG) from Homo sapiens (Human).